We begin with the raw amino-acid sequence, 368 residues long: Phospho-N-acetylmuramoyl-pentapeptide-transferase (368 aa).

The next 9 membrane-spanning stretches (helical) occupy residues 23–43, 72–92, 94–114, 139–159, 170–190, 201–221, 238–258, 265–286, and 345–365; these read YITF…LVFG, IPTM…LLWA, IAEP…AVGF, VALG…SVLL, ITVD…TAVS, GLAA…AYLT, AGEV…FLWF, VFMG…ALLI, and KIVI…LLTL.

It belongs to the glycosyltransferase 4 family. MraY subfamily. Mg(2+) is required as a cofactor.

Its subcellular location is the cell inner membrane. It carries out the reaction UDP-N-acetyl-alpha-D-muramoyl-L-alanyl-gamma-D-glutamyl-meso-2,6-diaminopimeloyl-D-alanyl-D-alanine + di-trans,octa-cis-undecaprenyl phosphate = di-trans,octa-cis-undecaprenyl diphospho-N-acetyl-alpha-D-muramoyl-L-alanyl-D-glutamyl-meso-2,6-diaminopimeloyl-D-alanyl-D-alanine + UMP. Its pathway is cell wall biogenesis; peptidoglycan biosynthesis. Functionally, catalyzes the initial step of the lipid cycle reactions in the biosynthesis of the cell wall peptidoglycan: transfers peptidoglycan precursor phospho-MurNAc-pentapeptide from UDP-MurNAc-pentapeptide onto the lipid carrier undecaprenyl phosphate, yielding undecaprenyl-pyrophosphoryl-MurNAc-pentapeptide, known as lipid I. This is Phospho-N-acetylmuramoyl-pentapeptide-transferase from Chloroherpeton thalassium (strain ATCC 35110 / GB-78).